The primary structure comprises 2763 residues: Large tegument protein deneddylase (2763 aa).

Residues 1 to 247 (MDIIPPIAVT…CDTYFTDEQY (247 aa)) form a deubiquitination activity region. One can recognise a Peptidase C76 domain in the interval 12–237 (AGVGSRNQFD…SSAVTLIYGS (226 aa)). Catalysis depends on residues C32, D168, and H170. The interaction with inner tegument protein stretch occupies residues 495–523 (LELFINLTILRLTGFVVENGTRTHHGATS). Repeat copies occupy residues 2455–2457 (PVQ), 2458–2460 (PVQ), 2461–2463 (PAQ), 2464–2466 (PVQ), 2467–2469 (PAQ), 2470–2472 (PAQ), 2473–2475 (PVQ), and 2476–2478 (PAQ). The segment at 2455–2478 (PVQPVQPAQPVQPAQPAQPVQPAQ) is 8 X 3 AA repeats of P-A/V-Q. The disordered stretch occupies residues 2630–2651 (NYKTRQPSPNFPRDVHTWGVSS).

This sequence belongs to the herpesviridae large tegument protein family. In terms of assembly, interacts with host CUL1 and CUL4A; these interactions inhibit the E3 ligase activity of cullins. Interacts with inner tegument protein. Interacts with capsid vertex specific component CVC2. Interacts with the major capsid protein/MCP.

Its subcellular location is the virion tegument. It localises to the host cytoplasm. The protein localises to the host nucleus. The enzyme catalyses Thiol-dependent hydrolysis of ester, thioester, amide, peptide and isopeptide bonds formed by the C-terminal Gly of ubiquitin (a 76-residue protein attached to proteins as an intracellular targeting signal).. Its function is as follows. Large tegument protein that plays multiple roles in the viral cycle. During viral entry, remains associated with the capsid while most of the tegument is detached and participates in the capsid transport toward the host nucleus. Plays a role in the routing of the capsid at the nuclear pore complex and subsequent uncoating. Within the host nucleus, acts as a deneddylase and promotes the degradation of nuclear CRLs (cullin-RING ubiquitin ligases) and thereby stabilizes nuclear CRL substrates, while cytoplasmic CRLs remain unaffected. These modifications prevent host cell cycle S-phase progression and create a favorable environment allowing efficient viral genome replication. Participates later in the secondary envelopment of capsids. Indeed, plays a linker role for the association of the outer viral tegument to the capsids together with the inner tegument protein. The chain is Large tegument protein deneddylase from Varicella-zoster virus (strain Oka vaccine) (HHV-3).